Reading from the N-terminus, the 111-residue chain is Urease subunit beta (111 aa).

Belongs to the urease beta subunit family. Heterotrimer of UreA (gamma), UreB (beta) and UreC (alpha) subunits. Three heterotrimers associate to form the active enzyme.

It localises to the cytoplasm. The catalysed reaction is urea + 2 H2O + H(+) = hydrogencarbonate + 2 NH4(+). It functions in the pathway nitrogen metabolism; urea degradation; CO(2) and NH(3) from urea (urease route): step 1/1. This Geobacillus kaustophilus (strain HTA426) protein is Urease subunit beta.